Consider the following 530-residue polypeptide: 26S proteasome non-ATPase regulatory subunit 3 (530 aa).

Residues 1 to 16 (MKQEGSARRRGADKAK) show a composition bias toward basic and acidic residues. The tract at residues 1–65 (MKQEGSARRR…TEHSQRELDT (65 aa)) is disordered. Residues 17-30 (PPPGGEQEPPPPAP) are compositionally biased toward pro residues. A Glycyl lysine isopeptide (Lys-Gly) (interchain with G-Cter in SUMO1); alternate cross-link involves residue Lys36. Lys36 participates in a covalent cross-link: Glycyl lysine isopeptide (Lys-Gly) (interchain with G-Cter in SUMO2); alternate. The PCI domain occupies 282-461 (ARYLYYTGRI…GYVQSKEMID (180 aa)). Residues Ser414 and Ser426 each carry the phosphoserine modification. The tract at residues 496–530 (SYNKDLESAEERREREQQDLEFAKEMAEDDDDSFP) is disordered. Residues 497-521 (YNKDLESAEERREREQQDLEFAKEM) are compositionally biased toward basic and acidic residues.

Belongs to the proteasome subunit S3 family. As to quaternary structure, component of the 19S proteasome regulatory particle complex. The 26S proteasome consists of a 20S core particle (CP) and two 19S regulatory subunits (RP). The regulatory particle is made of a lid composed of 9 subunits including PSMD3, a base containing 6 ATPases and few additional components. Interacts with UBQLN1 (via ubiquitin-like domain). Interacts with ERCC6.

Functionally, component of the 26S proteasome, a multiprotein complex involved in the ATP-dependent degradation of ubiquitinated proteins. This complex plays a key role in the maintenance of protein homeostasis by removing misfolded or damaged proteins, which could impair cellular functions, and by removing proteins whose functions are no longer required. Therefore, the proteasome participates in numerous cellular processes, including cell cycle progression, apoptosis, or DNA damage repair. The sequence is that of 26S proteasome non-ATPase regulatory subunit 3 (Psmd3) from Mus musculus (Mouse).